The sequence spans 115 residues: Large ribosomal subunit protein uL18 (115 aa).

The segment at 1–20 is disordered; the sequence is MKYTKQEARKRRHYRVRSKV. Residues 8–18 are compositionally biased toward basic residues; that stretch reads ARKRRHYRVRS.

It belongs to the universal ribosomal protein uL18 family. In terms of assembly, part of the 50S ribosomal subunit; part of the 5S rRNA/L5/L18/L25 subcomplex. Contacts the 5S and 23S rRNAs.

Functionally, this is one of the proteins that bind and probably mediate the attachment of the 5S RNA into the large ribosomal subunit, where it forms part of the central protuberance. The sequence is that of Large ribosomal subunit protein uL18 from Mesoplasma florum (strain ATCC 33453 / NBRC 100688 / NCTC 11704 / L1) (Acholeplasma florum).